A 299-amino-acid polypeptide reads, in one-letter code: ATP synthase gamma chain (299 aa).

It belongs to the ATPase gamma chain family. In terms of assembly, F-type ATPases have 2 components, CF(1) - the catalytic core - and CF(0) - the membrane proton channel. CF(1) has five subunits: alpha(3), beta(3), gamma(1), delta(1), epsilon(1). CF(0) has three main subunits: a, b and c.

It is found in the cell inner membrane. In terms of biological role, produces ATP from ADP in the presence of a proton gradient across the membrane. The gamma chain is believed to be important in regulating ATPase activity and the flow of protons through the CF(0) complex. The chain is ATP synthase gamma chain from Rhodospirillum rubrum.